The chain runs to 633 residues: Threonine--tRNA ligase (633 aa).

The 59-residue stretch at 1 to 59 (MIRITFSAEQKVKEYSGKVTGFDILQPDVLKEAIAFKVNGELHDLSREIEADAEIEVIQ) folds into the TGS domain. The tract at residues 240–532 (DHRKIAKDMD…LIENYAGKFP (293 aa)) is catalytic. Zn(2+)-binding residues include Cys-332, His-383, and His-509.

The protein belongs to the class-II aminoacyl-tRNA synthetase family. Homodimer. Zn(2+) serves as cofactor.

The protein localises to the cytoplasm. The catalysed reaction is tRNA(Thr) + L-threonine + ATP = L-threonyl-tRNA(Thr) + AMP + diphosphate + H(+). Functionally, catalyzes the attachment of threonine to tRNA(Thr) in a two-step reaction: L-threonine is first activated by ATP to form Thr-AMP and then transferred to the acceptor end of tRNA(Thr). Also edits incorrectly charged L-seryl-tRNA(Thr). The polypeptide is Threonine--tRNA ligase (Wolbachia sp. subsp. Drosophila simulans (strain wRi)).